The chain runs to 265 residues: Thymidylate synthase (265 aa).

Arg21 is a binding site for dUMP. Position 51 (His51) interacts with (6R)-5,10-methylene-5,6,7,8-tetrahydrofolate. 127–128 (RR) contributes to the dUMP binding site. Catalysis depends on Cys147, which acts as the Nucleophile. Residues 167–170 (RSAD), Asn178, and 208–210 (HLY) each bind dUMP. A (6R)-5,10-methylene-5,6,7,8-tetrahydrofolate-binding site is contributed by Asp170. Ser264 is a binding site for (6R)-5,10-methylene-5,6,7,8-tetrahydrofolate.

This sequence belongs to the thymidylate synthase family. Bacterial-type ThyA subfamily. As to quaternary structure, homodimer.

It is found in the cytoplasm. It carries out the reaction dUMP + (6R)-5,10-methylene-5,6,7,8-tetrahydrofolate = 7,8-dihydrofolate + dTMP. It functions in the pathway pyrimidine metabolism; dTTP biosynthesis. Catalyzes the reductive methylation of 2'-deoxyuridine-5'-monophosphate (dUMP) to 2'-deoxythymidine-5'-monophosphate (dTMP) while utilizing 5,10-methylenetetrahydrofolate (mTHF) as the methyl donor and reductant in the reaction, yielding dihydrofolate (DHF) as a by-product. This enzymatic reaction provides an intracellular de novo source of dTMP, an essential precursor for DNA biosynthesis. The sequence is that of Thymidylate synthase from Neisseria gonorrhoeae.